A 735-amino-acid polypeptide reads, in one-letter code: Transcription factor RFX4 (735 aa).

The segment at 27–59 is disordered; the sequence is NKRYSSHTSLGNVSNDENEEKENNRASKPHSTP. The span at 32–41 shows a compositional bias: polar residues; sequence SHTSLGNVSN. A DNA-binding region spans residues 44 to 126; sequence NEEKENNRAS…RRLGTRGQSK (83 aa). Positions 61-136 form a DNA-binding region, RFX-type winged-helix; it reads TLQWLEENYE…YHYYGIAVKE (76 aa). The tract at residues 315 to 487 is necessary for dimerization; that stretch reads RFSQILRRQT…NELMRAMKGE (173 aa). A disordered region spans residues 501–538; that stretch reads EATPPTPSPGPSFSPAKSATSVEVPPPSSPVSNPSPEY.

Belongs to the RFX family. In terms of assembly, homodimer. Heterodimer with RFX2 and RFX3. Binds DNA. Interacts with GPS2. In terms of tissue distribution, isoform 1: Brain-specific. Isoform 2: Testis-specific. Isoform 1: Highly expressed in the suprachiasmatic nucleus, the central pacemaker site of the circadian clock (at protein level).

It localises to the nucleus. Transcription factor that plays a role in early brain development. May activate transcription by interacting directly with the X-box. May activate transcription from CX3CL1 promoter through the X-box during brain development. May be required for neural tube ciliogenesis during embryogenesis. This Mus musculus (Mouse) protein is Transcription factor RFX4 (Rfx4).